Here is a 119-residue protein sequence, read N- to C-terminus: Holo-[acyl-carrier-protein] synthase (119 aa).

Mg(2+) is bound by residues aspartate 7 and glutamate 56.

This sequence belongs to the P-Pant transferase superfamily. AcpS family. The cofactor is Mg(2+).

The protein localises to the cytoplasm. It carries out the reaction apo-[ACP] + CoA = holo-[ACP] + adenosine 3',5'-bisphosphate + H(+). In terms of biological role, transfers the 4'-phosphopantetheine moiety from coenzyme A to a Ser of acyl-carrier-protein. The sequence is that of Holo-[acyl-carrier-protein] synthase from Chlamydia trachomatis serovar L2 (strain ATCC VR-902B / DSM 19102 / 434/Bu).